A 531-amino-acid polypeptide reads, in one-letter code: Non-muscle caldesmon (531 aa).

The segment at 20–200 (AYQRNDDDEE…LKGGNLGENQ (181 aa)) is myosin and calmodulin-binding. A disordered region spans residues 21–379 (YQRNDDDEEE…KKPFKCFTPK (359 aa)). A compositionally biased stretch (basic and acidic residues) spans 41-50 (QERLRQKQEE). Polar residues predominate over residues 54 to 68 (GQVTDQVEAHVQNSA). A compositionally biased stretch (basic and acidic residues) spans 93–116 (RLARREERRQKRLQEALERQKEFD). Residues 120–133 (TDGSLSVPSRRMQN) show a composition bias toward polar residues. Ser123 is subject to Phosphoserine. Residues 143–156 (GEEKGESRSGRYEM) show a composition bias toward basic and acidic residues. Residues 162-172 (VITSYQKNSYQ) show a composition bias toward polar residues. Basic and acidic residues predominate over residues 200-227 (QIKDEKIKKDKEPKEEVKNFLDRKKGFT). Ser249 carries the phosphoserine; by CDK1 modification. 2 stretches are compositionally biased toward basic and acidic residues: residues 271 to 297 (AGKRLEELRRRRGETESEEFEKLKQKQ) and 305 to 372 (EELK…DKKP). A tropomyosin-binding region spans residues 303-360 (ELEELKKKREERRKVLEEEEQRRKQEEADRKAREEEEKRRLKEEIERRRAEAAEKRQK). Residue Ser382 is modified to Phosphoserine. A Glycyl lysine isopeptide (Lys-Gly) (interchain with G-Cter in SUMO2) cross-link involves residue Lys384. A strong actin-binding region spans residues 392–424 (LNKSVQKSGVKSTHQAAVVSKIDSRLEQYTNAI). At Ser395 the chain carries Phosphoserine. The tract at residues 402–412 (KSTHQAAVVSK) is tropomyosin-binding. The tract at residues 454–460 (WEKGSVF) is calmodulin-binding. A disordered region spans residues 458-531 (SVFSSPSASG…VDKVTSPTKV (74 aa)). Positions 459-471 (VFSSPSASGTPNK) are enriched in polar residues. Position 462 is a phosphoserine; by CDK1 (Ser462). A Phosphothreonine; by CDK1 modification is found at Thr468. Phosphoserine; by CDK1 is present on residues Ser491 and Ser497. The span at 503 to 522 (SDLRPGDVSGKRNLWEKQSV) shows a compositional bias: basic and acidic residues. The segment at 506–531 (RPGDVSGKRNLWEKQSVDKVTSPTKV) is weak actin-binding. Position 527 is a phosphoserine; by CDK1 (Ser527).

The protein belongs to the caldesmon family. In terms of processing, in non-muscle cells, phosphorylation by CDK1 during mitosis causes caldesmon to dissociate from microfilaments. Phosphorylation reduces caldesmon binding to actin, myosin, and calmodulin as well as its inhibition of actomyosin ATPase activity. Phosphorylation also occurs in both quiescent and dividing smooth muscle cells with similar effects on the interaction with actin and calmodulin and on microfilaments reorganization. CDK1-mediated phosphorylation promotes Schwann cell migration during peripheral nerve regeneration. High-molecular-weight caldesmon (h-caldesmon) is predominantly expressed in smooth muscles, whereas low-molecular-weight caldesmon (l-caldesmon) is widely distributed in non-muscle tissues and cells. Not expressed in skeletal muscle or heart.

It is found in the cytoplasm. It localises to the cytoskeleton. The protein localises to the myofibril. The protein resides in the stress fiber. Actin- and myosin-binding protein implicated in the regulation of actomyosin interactions in smooth muscle and nonmuscle cells (could act as a bridge between myosin and actin filaments). Stimulates actin binding of tropomyosin which increases the stabilization of actin filament structure. In muscle tissues, inhibits the actomyosin ATPase by binding to F-actin. This inhibition is attenuated by calcium-calmodulin and is potentiated by tropomyosin. Interacts with actin, myosin, two molecules of tropomyosin and with calmodulin. Also plays an essential role during cellular mitosis and receptor capping. Involved in Schwann cell migration during peripheral nerve regeneration. This Rattus norvegicus (Rat) protein is Non-muscle caldesmon (Cald1).